The sequence spans 671 residues: MASGGSGGVSVPALWSEVNRYGQNGDFTRALKTVNKILQINKDDVTALHCKVVCLIQNGSFKEALNVINTHTKVLANNSLSFEKAYCEYRLNRIENALKTIESANQQTDKLKELYGQVLYRLERYDECLAVYRDLVRNSQDDYDEERKTNLSAVVAAQSNWEKVVPENLGLQEGTHELCYNTACALIGQGQLNQAMKILQKAEDLCRRSLSEDTDGTEEDPQAELAIIHGQMAYILQLQGRTEEALQLYNQIIKLKPTDVGLLAVIANNIITINKDQNVFDSKKKVKLTNAEGVEFKLSKKQLQAIEFNKALLAMYTNQAEQCRKISASLQSQSPEHLLPVLIQAAQLCREKQHTKAIELLQEFSDQHPENAAEIKLTMAQLKISQGNISKACLILRSIEELKHKPGMVSALVTMYSHEEDIDSAIEVFTQAIQWYQNHQPKSPAHLSLIREAANFKLKYGRKKEAISDLQQLWKQNPKDIHTLAQLISAYSLVDPEKAKALSKHLPSSDSMSLKVDVEALENSAGATYIRKKGGKVTGDSQPKEQGQGDLKKKKKKKKGKLPKNYDPKVTPDPERWLPMRERSYYRGRKKGKKKDQIGKGTQGATAGASSELDASKTVSSPPTSPRPGSAATVSASTSNIIPPRHQKPAGAPATKKKQQQKKKKGGKGGW.

Ala2 carries the N-acetylalanine modification. The tract at residues 9–163 is required for interaction with SRP68; that stretch reads VSVPALWSEV…VVAAQSNWEK (155 aa). 3 TPR repeats span residues 11–44, 109–142, and 226–259; these read VPALWSEVNRYGQNGDFTRALKTVNKILQINKDD, DKLKELYGQVLYRLERYDECLAVYRDLVRNSQDD, and AIIHGQMAYILQLQGRTEEALQLYNQIIKLKPTD. The interval 379–509 is required for the interaction with the SRP68/7SL RNA complex; the sequence is MAQLKISQGN…KALSKHLPSS (131 aa). A Glycyl lysine isopeptide (Lys-Gly) (interchain with G-Cter in SUMO1); alternate cross-link involves residue Lys391. Residue Lys391 forms a Glycyl lysine isopeptide (Lys-Gly) (interchain with G-Cter in SUMO2); alternate linkage. TPR repeat units follow at residues 406 to 439 and 447 to 480; these read PGMVSALVTMYSHEEDIDSAIEVFTQAIQWYQNH and LSLIREAANFKLKYGRKKEAISDLQQLWKQNPKD. Residues 532-671 form a disordered region; sequence KKGGKVTGDS…KKKKGGKGGW (140 aa). The RNA-binding stretch occupies residues 545–617; that stretch reads EQGQGDLKKK…GASSELDASK (73 aa). Residues 552-562 show a composition bias toward basic residues; that stretch reads KKKKKKKKGKL. The span at 564 to 585 shows a compositional bias: basic and acidic residues; the sequence is KNYDPKVTPDPERWLPMRERSY. Residues Thr571 and Thr618 each carry the phosphothreonine modification. Residues Ser630 and Ser635 each carry the phosphoserine modification. Residues 632 to 641 are compositionally biased toward polar residues; that stretch reads ATVSASTSNI. Residues 655–671 show a composition bias toward basic residues; that stretch reads TKKKQQQKKKKGGKGGW.

It belongs to the SRP72 family. In terms of assembly, heterodimer with SRP68. SRP68-SRP72 heterodimer formation is stabilized by the presence of 7SL RNA. Component of a signal recognition particle (SRP) complex that consists of a 7SL RNA molecule of 300 nucleotides and six protein subunits: SRP72, SRP68, SRP54, SRP19, SRP14 and SRP9. Within the SRP complex, interacts (via N-terminus) with SRP68 (via C-terminus).

It is found in the cytoplasm. It localises to the endoplasmic reticulum. Component of the signal recognition particle (SRP) complex, a ribonucleoprotein complex that mediates the cotranslational targeting of secretory and membrane proteins to the endoplasmic reticulum (ER). The SRP complex interacts with the signal sequence in nascent secretory and membrane proteins and directs them to the membrane of the ER. The SRP complex targets the ribosome-nascent chain complex to the SRP receptor (SR), which is anchored in the ER, where SR compaction and GTPase rearrangement drive cotranslational protein translocation into the ER. Binds the signal recognition particle RNA (7SL RNA) in presence of SRP68. Can bind 7SL RNA with low affinity. The SRP complex possibly participates in the elongation arrest function. This is Signal recognition particle subunit SRP72 (SRP72) from Homo sapiens (Human).